The sequence spans 321 residues: Nod factor export ATP-binding protein I (321 aa).

Residues L17–Y247 enclose the ABC transporter domain. G49 to T56 contributes to the ATP binding site.

This sequence belongs to the ABC transporter superfamily. Lipooligosaccharide exporter (TC 3.A.1.102) family. The complex is composed of two ATP-binding proteins (NodI) and two transmembrane proteins (NodJ).

The protein localises to the cell inner membrane. In terms of biological role, part of the ABC transporter complex NodIJ involved in the export of the nodulation factors (Nod factors), the bacterial signal molecules that induce symbiosis and subsequent nodulation induction. Nod factors are LCO (lipo-chitin oligosaccharide), a modified beta-1,4-linked N-acetylglucosamine oligosaccharide. This subunit is responsible for energy coupling to the transport system. The protein is Nod factor export ATP-binding protein I of Ralstonia nicotianae (strain ATCC BAA-1114 / GMI1000) (Ralstonia solanacearum).